The following is a 344-amino-acid chain: GTP 3',8-cyclase (344 aa).

A Radical SAM core domain is found at 19–245; that stretch reads PFGRAVTYLR…DIPYRTGGPA (227 aa). Arg-28 serves as a coordination point for GTP. The [4Fe-4S] cluster site is built by Cys-35 and Cys-39. Tyr-41 contributes to the S-adenosyl-L-methionine binding site. [4Fe-4S] cluster is bound at residue Cys-42. Residue Arg-77 participates in GTP binding. Gly-81 provides a ligand contact to S-adenosyl-L-methionine. Thr-111 provides a ligand contact to GTP. Residue Ser-135 coordinates S-adenosyl-L-methionine. Lys-171 provides a ligand contact to GTP. Met-205 serves as a coordination point for S-adenosyl-L-methionine. Residues Cys-268 and Cys-271 each coordinate [4Fe-4S] cluster. GTP is bound at residue 273–275; sequence RVR. Cys-285 provides a ligand contact to [4Fe-4S] cluster.

The protein belongs to the radical SAM superfamily. MoaA family. As to quaternary structure, monomer and homodimer. [4Fe-4S] cluster is required as a cofactor.

It catalyses the reaction GTP + AH2 + S-adenosyl-L-methionine = (8S)-3',8-cyclo-7,8-dihydroguanosine 5'-triphosphate + 5'-deoxyadenosine + L-methionine + A + H(+). It functions in the pathway cofactor biosynthesis; molybdopterin biosynthesis. Its function is as follows. Catalyzes the cyclization of GTP to (8S)-3',8-cyclo-7,8-dihydroguanosine 5'-triphosphate. This chain is GTP 3',8-cyclase, found in Brucella ovis (strain ATCC 25840 / 63/290 / NCTC 10512).